A 431-amino-acid chain; its full sequence is Large envelope protein (431 aa).

Gly2 carries N-myristoyl glycine; by host lipidation. A pre-S1 region spans residues 2–148 (GNNIKVTFNP…PPLRDTHPHL (147 aa)). A pre-S region spans residues 2–207 (GNNIKVTFNP…PSTTGDPALS (206 aa)). The Virion surface; in external conformation segment spans residues 2–214 (GNNIKVTFNP…ALSPEMSPSS (213 aa)). Over 2 to 286 (GNNIKVTFNP…NGFRWMYLRR (285 aa)) the chain is Intravirion; in internal conformation. A glycan (N-linked (GlcNAc...) asparagine) is linked at Asn3. A disordered region spans residues 115–146 (IPRGLVPPQTPTNRDQGRKPTPPTPPLRDTHP). Positions 149-207 (TMKNQTFRLQGFVDGLRDLTTTERYHNAYGDPFTTLSPVVPTVSTILSPPSTTGDPALS) are pre-S2. Residues 215 to 235 (LLGLLAGLQVVYFLWTKILTI) form a helical membrane-spanning segment. Over 236 to 286 (AQNLDWWWTSLSFPGGIPECTGQNSQFQTCKHLPTSCPPTCNGFRWMYLRR) the chain is Intravirion; in external conformation. A helical membrane pass occupies residues 287–307 (FIIYLLVLLLCLIFLLVLLDW). Topologically, residues 308–379 (KGLIPVCPLQ…WALARFSWLN (72 aa)) are virion surface. Residue Asn351 is glycosylated (N-linked (GlcNAc...) asparagine; by host). The chain crosses the membrane as a helical span at residues 380 to 400 (LLVPLLQWLGGISLIAWFLLI). Residues 401–406 (WMIWFW) are Intravirion-facing. The chain crosses the membrane as a helical span at residues 407–429 (GPALLSILPPFIPIFVLFFLIWV). Residues 430–431 (YI) lie on the Virion surface side of the membrane.

This sequence belongs to the orthohepadnavirus major surface antigen family. As to quaternary structure, in its internal form (Li-HBsAg), interacts with the capsid protein and with the isoform S. Interacts with host chaperone CANX. In terms of assembly, associates with host chaperone CANX through its pre-S2 N glycan; this association may be essential for isoform M proper secretion. Interacts with isoform L. Interacts with the antigens of satellite virus HDV (HDVAgs); this interaction is required for encapsidation of HDV genomic RNA. Post-translationally, isoform M is N-terminally acetylated by host at a ratio of 90%, and N-glycosylated by host at the pre-S2 region. Myristoylated.

The protein resides in the virion membrane. Functionally, the large envelope protein exists in two topological conformations, one which is termed 'external' or Le-HBsAg and the other 'internal' or Li-HBsAg. In its external conformation the protein attaches the virus to cell receptors and thereby initiating infection. This interaction determines the species specificity and liver tropism. This attachment induces virion internalization predominantly through caveolin-mediated endocytosis. The large envelope protein also assures fusion between virion membrane and endosomal membrane. In its internal conformation the protein plays a role in virion morphogenesis and mediates the contact with the nucleocapsid like a matrix protein. The middle envelope protein plays an important role in the budding of the virion. It is involved in the induction of budding in a nucleocapsid independent way. In this process the majority of envelope proteins bud to form subviral lipoprotein particles of 22 nm of diameter that do not contain a nucleocapsid. This chain is Large envelope protein, found in Woodchuck hepatitis B virus (isolate 59) (WHV).